Consider the following 383-residue polypeptide: ATP phosphoribosyltransferase regulatory subunit (383 aa).

This sequence belongs to the class-II aminoacyl-tRNA synthetase family. HisZ subfamily. In terms of assembly, heteromultimer composed of HisG and HisZ subunits.

It localises to the cytoplasm. It functions in the pathway amino-acid biosynthesis; L-histidine biosynthesis; L-histidine from 5-phospho-alpha-D-ribose 1-diphosphate: step 1/9. Required for the first step of histidine biosynthesis. May allow the feedback regulation of ATP phosphoribosyltransferase activity by histidine. The sequence is that of ATP phosphoribosyltransferase regulatory subunit from Desulfitobacterium hafniense (strain DSM 10664 / DCB-2).